The sequence spans 314 residues: tRNA pseudouridine synthase B (314 aa).

The active-site Nucleophile is Asp47.

The protein belongs to the pseudouridine synthase TruB family. Type 1 subfamily.

The enzyme catalyses uridine(55) in tRNA = pseudouridine(55) in tRNA. Its function is as follows. Responsible for synthesis of pseudouridine from uracil-55 in the psi GC loop of transfer RNAs. This chain is tRNA pseudouridine synthase B, found in Vibrio parahaemolyticus serotype O3:K6 (strain RIMD 2210633).